The following is a 205-amino-acid chain: Inactive ribonuclease-like protein 9 (205 aa).

The N-terminal stretch at 1–26 (MMRTLITTHPLPLLLLPQQLLQPVQF) is a signal peptide. 3 disulfides stabilise this stretch: cysteine 98–cysteine 153, cysteine 116–cysteine 168, and cysteine 123–cysteine 130. 2 N-linked (GlcNAc...) asparagine glycosylation sites follow: asparagine 131 and asparagine 143.

Belongs to the pancreatic ribonuclease family.

It localises to the secreted. Functionally, does not exhibit any ribonuclease activity. This Pan troglodytes (Chimpanzee) protein is Inactive ribonuclease-like protein 9 (RNASE9).